A 498-amino-acid chain; its full sequence is UPF0371 protein cauri_2449 (498 aa).

This sequence belongs to the UPF0371 family.

This chain is UPF0371 protein cauri_2449, found in Corynebacterium aurimucosum (strain ATCC 700975 / DSM 44827 / CIP 107346 / CN-1) (Corynebacterium nigricans).